The following is a 20-amino-acid chain: Equinatoxin-1 (20 aa).

Positions 3-12 (AVAGAVIEGA) are plays an important role in the hemolytic activity. The interval 11–20 (GASLTFNVLQ) is N-terminal region.

The protein belongs to the actinoporin family. Sea anemone subfamily. In terms of assembly, octamer or nonamer in membranes. Monomer in the soluble state.

Its subcellular location is the secreted. The protein localises to the nematocyst. It is found in the target cell membrane. Pore-forming protein that forms cations-selective hydrophilic pores of around 1 nm and causes cardiac stimulation and cytolysis. Pore formation is a multi-step process that involves specific recognition of membrane sphingomyelin (but neither cholesterol nor phosphatidylcholine) using aromatic rich region and adjacent phosphocholine (POC) binding site, firm binding to the membrane (mainly driven by hydrophobic interactions) accompanied by the transfer of the N-terminal region to the lipid-water interface and finally pore formation after oligomerization of monomers. Cytolytic effects include red blood cells hemolysis, platelet aggregation and lysis, cytotoxic and cytostatic effects on fibroblasts. Lethality in mammals has been ascribed to severe vasospasm of coronary vessels, cardiac arrhythmia, and inotropic effects. This chain is Equinatoxin-1, found in Actinia equina (Beadlet anemone).